Consider the following 386-residue polypeptide: Probable pectin lyase F (386 aa).

Positions 1–16 (MKTAVLSLLLALQAYA) are cleaved as a signal peptide. A disulfide bridge links cysteine 77 with cysteine 101. A glycan (N-linked (GlcNAc...) asparagine) is linked at asparagine 124. The active site involves arginine 251. An intrachain disulfide couples cysteine 326 to cysteine 334.

The protein belongs to the polysaccharide lyase 1 family.

The protein resides in the secreted. It catalyses the reaction Eliminative cleavage of (1-&gt;4)-alpha-D-galacturonan methyl ester to give oligosaccharides with 4-deoxy-6-O-methyl-alpha-D-galact-4-enuronosyl groups at their non-reducing ends.. Functionally, pectinolytic enzymes consist of four classes of enzymes: pectin lyase, polygalacturonase, pectin methylesterase and rhamnogalacturonase. Among pectinolytic enzymes, pectin lyase is the most important in depolymerization of pectin, since it cleaves internal glycosidic bonds of highly methylated pectins. This chain is Probable pectin lyase F (pelF), found in Neosartorya fischeri (strain ATCC 1020 / DSM 3700 / CBS 544.65 / FGSC A1164 / JCM 1740 / NRRL 181 / WB 181) (Aspergillus fischerianus).